A 623-amino-acid polypeptide reads, in one-letter code: ATP-dependent lipid A-core flippase (623 aa).

5 helical membrane-spanning segments follow: residues 66–86 (LVLA…LAVI), 103–123 (VWFL…CNFF), 190–210 (LVVI…TLII), 290–310 (LTPL…AVAL), and 317–337 (ALTV…FDPI). Positions 67–349 (VLAVLLMAGA…LTNLAGKMQK (283 aa)) constitute an ABC transmembrane type-1 domain. One can recognise an ABC transporter domain in the interval 382 to 618 (VEFRAVSHRF…NGLYASLYNM (237 aa)). 416 to 423 (GRSGSGKT) is a binding site for ATP.

It belongs to the ABC transporter superfamily. Lipid exporter (TC 3.A.1.106) family. In terms of assembly, homodimer.

The protein resides in the cell inner membrane. The catalysed reaction is ATP + H2O + lipid A-core oligosaccharideSide 1 = ADP + phosphate + lipid A-core oligosaccharideSide 2.. Involved in lipopolysaccharide (LPS) biosynthesis. Translocates lipid A-core from the inner to the outer leaflet of the inner membrane. Transmembrane domains (TMD) form a pore in the inner membrane and the ATP-binding domain (NBD) is responsible for energy generation. This is ATP-dependent lipid A-core flippase from Bordetella pertussis (strain Tohama I / ATCC BAA-589 / NCTC 13251).